The sequence spans 397 residues: MSLRSCSTEMIPEFTVTEITDLVRQVMHDTFYCIKIRGEISGLSRPSSGHVYLSLKDDNSVISAVCWNGTRLDVQFENGLEVICTGHLSTYQSRYQLVIEGMVLAGQGKLAAMLEERRKKLEKEGLFDQARKKPLPLLPLKIGVITSPTGAVIRDILNRVKHRFPSHIIVWPVQVQGSQASAMVVQAILGFNNLEEPPDVIIVARGGGSIEDLWPFNDEELARTTAASKIPIVSAIGHETDFTIIDYAADVRAPTPTAAVEIVLPERQQLVSDIAHKLSKIRSAVRNVLGAKEHRLLQLYGVLTETKHKISEVGRSALAHQEKIEFLFKVALLKKQQYLDNLIGRIDRYNKEHIISVGYAVIYDNTGQHVSSANAVAPDDTIVIEWKDGKRRAAILT.

It belongs to the XseA family. Heterooligomer composed of large and small subunits.

It is found in the cytoplasm. The catalysed reaction is Exonucleolytic cleavage in either 5'- to 3'- or 3'- to 5'-direction to yield nucleoside 5'-phosphates.. Bidirectionally degrades single-stranded DNA into large acid-insoluble oligonucleotides, which are then degraded further into small acid-soluble oligonucleotides. This chain is Exodeoxyribonuclease 7 large subunit, found in Anaplasma marginale (strain St. Maries).